The sequence spans 71 residues: Transcription modulator YdgT (71 aa).

This sequence belongs to the Hha/YmoA/Cnu family. Forms complexes with both H-NS and StpA.

Its function is as follows. Binds to H-NS and modified the range of genes it silences; H-NS alonge silences core gene while the H-NS-Hha complex (and presumably also H-NS-YdgT) silences genes acquired by horizontal gene transfer. Plays a role silencing virulence factors in the absence of factors that induce pathogenicity. The complex formed with H-NS binds to the specific 26-bp cnb site in the origin of replication oriC. The sequence is that of Transcription modulator YdgT (ydgT) from Salmonella choleraesuis (strain SC-B67).